A 484-amino-acid chain; its full sequence is MGKALMVQGTSSGAGKSLLVMALCRIFSNLGYDVVPFKSQNMSLNSAPSIEGGEISRAQYLQAVACRKKPSVRFNPILLKPEGNMRSQVVFMGKPIGSVSAREYMLSRKEELFRKAMKVLDELMVEHEIVIIEGAGSPVEINLKDYDIANMRVARHAKAKTILVTDIDRGGSFASIVGTMELLSKEERNLILGFVFNKFRGDASLLEPGFEYLEKRYGKPTLGVVPCIEHKLPEEDSLTSFPKVNGELHIQIVKLPHISNFTDFEPLHWANGVDYVTKAEEIEGDLIIIPGSKNTVEDLLWMRENGIEDAIIQAHHEGSFVVGICGGFQMLGEKIIDNVESKRGEVKGIGLLPAKTIFTPVKRTNHLKAEILWEPAKRMSVEGYEIRMGRSTSERPFSIIREINGAKAFEPEGALGERTFGTYLHGIFHNFAFTERLLNFLRAEKGLEPISVGGWSIEEEIERFARVVEKNLDVGYIISELGLG.

The region spanning 247–433 is the GATase cobBQ-type domain; sequence ELHIQIVKLP…LHGIFHNFAF (187 aa). Cys-325 functions as the Nucleophile in the catalytic mechanism. The active site involves His-425.

It belongs to the CobB/CobQ family. CobQ subfamily.

The protein operates within cofactor biosynthesis; adenosylcobalamin biosynthesis. In terms of biological role, catalyzes amidations at positions B, D, E, and G on adenosylcobyrinic A,C-diamide. NH(2) groups are provided by glutamine, and one molecule of ATP is hydrogenolyzed for each amidation. This chain is Probable cobyric acid synthase, found in Thermococcus onnurineus (strain NA1).